We begin with the raw amino-acid sequence, 2395 residues long: Centrosomal protein of 295 kDa (2395 aa).

The necessary for centriole targeting and microtubule association stretch occupies residues 1-540; that stretch reads MKRKVMNGKL…KQADHLEVRP (540 aa). Ser13 is modified (phosphoserine). Coiled-coil stretches lie at residues 53 to 84, 114 to 148, 209 to 277, 488 to 538, and 567 to 592; these read QRRNQQVSHLAEELRAEWEEAQSQKIQNLEKL, AERKTKAEARHKEALKAQKKQKEMLMKQKTRHIKA, DAHL…KRQT, ARHK…HLEV, and QQNRLHKQTVETARKRLLEYQTVLKE. Disordered regions lie at residues 602-643, 660-681, and 735-764; these read LIPD…PVQP, GHIPQRQGETARAKQSVESQER, and SDSQQISSEDSENISSKPTEPSSSLPLMPE. Ser634 carries the post-translational modification Phosphoserine. Over residues 735-750 the composition is skewed to low complexity; sequence SDSQQISSEDSENISS. Residues 817–848 are a coiled coil; that stretch reads GQLELQKKVLQERQEAQEKLLSCTQKELEEQT. Disordered stretches follow at residues 864 to 893, 966 to 986, and 1212 to 1272; these read SLPSASAESGNIQTSSTKSDATVSSDSMDN, ADTQSRKIQKPPLPTNKKGLL, and VDPE…SKVT. The span at 1219–1250 shows a compositional bias: polar residues; sequence FQFSPQTQENRSSQQTGFSSFTPSLRQPSCVS. A coiled-coil region spans residues 1444–1488; the sequence is HDDLQALQQQLDVHREAIRSCQDIQEELLLQRLNKLEQRVSSKQI. Ser1565 is subject to Phosphoserine. Residues 1677 to 1692 show a composition bias toward low complexity; it reads PWGDSSQGSSSGDQPG. Disordered stretches follow at residues 1677–1715, 1819–1845, 1875–1899, 1989–2013, and 2354–2395; these read PWGDSSQGSSSGDQPGAAAVHAEHSGESLGKELSGRASK, SEEEEEEEACTNLSPLMKPDDEVETQE, ESFSEQTEHQEQESSSKEEETGSLS, DLSSPGTSQEDRDFYQQNSESSSEK, and NKTP…SQCI. The segment covering 1697-1710 has biased composition (basic and acidic residues); sequence HAEHSGESLGKELS. A compositionally biased stretch (basic and acidic residues) spans 1880–1894; that stretch reads QTEHQEQESSSKEEE. The interval 2329–2395 is ALMS motif; the sequence is SLGEAFMKRK…TAKRNRSQCI (67 aa). Positions 2376-2388 are enriched in basic and acidic residues; it reads HLKEAVSGDETAK.

As to quaternary structure, interacts (via ALMS motif) with microtubules; this interaction is direct.

The protein localises to the cytoplasm. The protein resides in the cytoskeleton. Its subcellular location is the microtubule organizing center. It localises to the centrosome. It is found in the centriole. The protein localises to the spindle. In terms of biological role, centriole-enriched microtubule-binding protein involved in centriole biogenesis. Essential for the generation of the distal portion of new-born centrioles in a CPAP- and CEP120-mediated elongation dependent manner during the cell cycle S/G2 phase after formation of the initiating cartwheel structure. Required for the recruitment of centriolar proteins, such as POC1B, POC5 and CEP135, into the distal portion of centrioles. Also required for centriole-to-centrosome conversion during mitotic progression, but is dispensable for cartwheel removal or centriole disengagement. Binds to and stabilizes centriolar microtubule. May be involved in ciliogenesis. The polypeptide is Centrosomal protein of 295 kDa (Rattus norvegicus (Rat)).